Here is a 364-residue protein sequence, read N- to C-terminus: Dihydroorotate dehydrogenase (quinone) (364 aa).

FMN contacts are provided by residues 61 to 65 (AGYDK) and threonine 85. Position 65 (lysine 65) interacts with substrate. 110–114 (NRLGF) is a binding site for substrate. Residues asparagine 139 and asparagine 170 each coordinate FMN. Asparagine 170 lines the substrate pocket. Serine 173 serves as the catalytic Nucleophile. Asparagine 175 is a substrate binding site. The FMN site is built by lysine 215 and serine 243. 244–245 (NT) contributes to the substrate binding site. FMN contacts are provided by residues glycine 266, glycine 295, and 316–317 (YT).

This sequence belongs to the dihydroorotate dehydrogenase family. Type 2 subfamily. In terms of assembly, monomer. The cofactor is FMN.

It is found in the cell membrane. It carries out the reaction (S)-dihydroorotate + a quinone = orotate + a quinol. It functions in the pathway pyrimidine metabolism; UMP biosynthesis via de novo pathway; orotate from (S)-dihydroorotate (quinone route): step 1/1. Its function is as follows. Catalyzes the conversion of dihydroorotate to orotate with quinone as electron acceptor. This chain is Dihydroorotate dehydrogenase (quinone), found in Brucella canis (strain ATCC 23365 / NCTC 10854 / RM-666).